The chain runs to 594 residues: ATP-dependent RNA helicase DBP9 (594 aa).

Residues 15–43 carry the Q motif motif; that stretch reads SSFDSFHLDSRLSQAIRSIGFKHPTLIQS. Residues 47–229 enclose the Helicase ATP-binding domain; it reads PLALQEKRDI…QQFCRSPAIL (183 aa). 60 to 67 contacts ATP; sequence ASTGSGKT. The DEAD box motif lies at 175 to 178; the sequence is DEVD. The region spanning 242–474 is the Helicase C-terminal domain; the sequence is KLIQYYVKVG…PYNFDIKQVE (233 aa). The segment at 562-594 is disordered; sequence PFHKNSHRKNGRVVKKKGNVQRKGKSDPLKSFK. Basic residues predominate over residues 565 to 584; that stretch reads KNSHRKNGRVVKKKGNVQRK. Residues 585-594 show a composition bias toward basic and acidic residues; the sequence is GKSDPLKSFK.

Belongs to the DEAD box helicase family. DDX56/DBP9 subfamily.

Its subcellular location is the nucleus. It is found in the nucleolus. The enzyme catalyses ATP + H2O = ADP + phosphate + H(+). Its function is as follows. ATP-binding RNA helicase involved in the biogenesis of 60S ribosomal subunits and is required for the normal formation of 25S and 5.8S rRNAs. In Kluyveromyces lactis (strain ATCC 8585 / CBS 2359 / DSM 70799 / NBRC 1267 / NRRL Y-1140 / WM37) (Yeast), this protein is ATP-dependent RNA helicase DBP9 (DBP9).